The sequence spans 1275 residues: ATP-dependent helicase/nuclease subunit A (1275 aa).

One can recognise a UvrD-like helicase ATP-binding domain in the interval 4-481; sequence PKWTKEQLEV…IMLYKNFRSR (478 aa). 25 to 32 is a binding site for ATP; that stretch reads AAAGSGKT. The 309-residue stretch at 531–839 folds into the UvrD-like helicase C-terminal domain; sequence TEIHLIQKDN…RIMSIHKSKG (309 aa).

This sequence belongs to the helicase family. AddA subfamily. Heterodimer of AddA and AddB/RexB. The cofactor is Mg(2+).

The enzyme catalyses Couples ATP hydrolysis with the unwinding of duplex DNA by translocating in the 3'-5' direction.. The catalysed reaction is ATP + H2O = ADP + phosphate + H(+). Functionally, the heterodimer acts as both an ATP-dependent DNA helicase and an ATP-dependent, dual-direction single-stranded exonuclease. Recognizes the chi site generating a DNA molecule suitable for the initiation of homologous recombination. The AddA nuclease domain is required for chi fragment generation; this subunit has the helicase and 3' -&gt; 5' nuclease activities. The protein is ATP-dependent helicase/nuclease subunit A of Clostridioides difficile (strain 630) (Peptoclostridium difficile).